Reading from the N-terminus, the 152-residue chain is Protein-export protein SecB (152 aa).

This sequence belongs to the SecB family. Homotetramer, a dimer of dimers. One homotetramer interacts with 1 SecA dimer.

It is found in the cytoplasm. In terms of biological role, one of the proteins required for the normal export of preproteins out of the cell cytoplasm. It is a molecular chaperone that binds to a subset of precursor proteins, maintaining them in a translocation-competent state. It also specifically binds to its receptor SecA. This Verminephrobacter eiseniae (strain EF01-2) protein is Protein-export protein SecB.